Consider the following 189-residue polypeptide: Small ribosomal subunit protein uS5 (189 aa).

One can recognise an S5 DRBM domain in the interval 27 to 90; that stretch reads FEERLLEAAR…EDAKKKTIRV (64 aa).

Belongs to the universal ribosomal protein uS5 family. As to quaternary structure, part of the 30S ribosomal subunit. Contacts proteins S4 and S8.

In terms of biological role, with S4 and S12 plays an important role in translational accuracy. Its function is as follows. Located at the back of the 30S subunit body where it stabilizes the conformation of the head with respect to the body. This is Small ribosomal subunit protein uS5 from Hydrogenobaculum sp. (strain Y04AAS1).